We begin with the raw amino-acid sequence, 262 residues long: Thrombin-like enzyme gyroxin B1.3 (262 aa).

The first 18 residues, 1-18, serve as a signal peptide directing secretion; it reads MVLIRVLANLLILQLSYA. Positions 19 to 262 are excised as a propeptide; sequence QKSSELVIGG…AGSETVNCPS (244 aa). In terms of domain architecture, Peptidase S1 spans 25 to 253; it reads VIGGDECNIN…HLDWIQNIIA (229 aa). 6 disulfide bridges follow: Cys31/Cys165, Cys52/Cys68, Cys102/Cys260, Cys144/Cys214, Cys176/Cys193, and Cys204/Cys229. Catalysis depends on His67, which acts as the Charge relay system. Residue Asn105 is glycosylated (N-linked (GlcNAc...) asparagine). Asp112 (charge relay system) is an active-site residue. Ser208 serves as the catalytic Charge relay system.

Belongs to the peptidase S1 family. Snake venom subfamily. In terms of assembly, monomer. In terms of tissue distribution, expressed by the venom gland.

It is found in the secreted. In terms of biological role, thrombin-like snake venom serine protease. Displays a specificity similar to trypsin. Releases only fibrinopeptide A in the conversion of fibrinogen to fibrin. Reversibly increases the permeability of the blood brain barrier (BBB) in mice. Induces the barrel rotation syndrome in mice, which is manifested by gyroxin-like, rapid rolling motions. This syndrome may be due to its effect on BBB permeability, and certainly also to other actions affecting endogenous substrates present in the endothelium, nervous tissues or blood. Also shows a moderate inhibitory activity on the human voltage-gated potassium channel Kv10.1/KCNH1/EAG1 (58% current inhibition at 5 uM). It blocks Kv10.1/KCNH1/EAG1 in a time and dose-dependent manner and with a mechanism independent of its enzymatic activity. It may have a preference in interacting with Kv10.1/KCNH1/EAG1 in its closed state, since the inhibitory effect of the toxin is decreased at more depolarized potentials. This chain is Thrombin-like enzyme gyroxin B1.3, found in Crotalus durissus terrificus (South American rattlesnake).